The sequence spans 213 residues: 3-isopropylmalate dehydratase small subunit (213 aa).

This sequence belongs to the LeuD family. LeuD type 1 subfamily. As to quaternary structure, heterodimer of LeuC and LeuD.

It carries out the reaction (2R,3S)-3-isopropylmalate = (2S)-2-isopropylmalate. Its pathway is amino-acid biosynthesis; L-leucine biosynthesis; L-leucine from 3-methyl-2-oxobutanoate: step 2/4. Its function is as follows. Catalyzes the isomerization between 2-isopropylmalate and 3-isopropylmalate, via the formation of 2-isopropylmaleate. The chain is 3-isopropylmalate dehydratase small subunit from Neisseria meningitidis serogroup B (strain ATCC BAA-335 / MC58).